We begin with the raw amino-acid sequence, 178 residues long: Ribosome rescue factor SmrB (178 aa).

Positions 99–174 (LDLHGLTQMQ…GNAALLILIE (76 aa)) constitute a Smr domain.

The protein belongs to the SmrB family. In terms of assembly, associates with collided ribosomes, but not with correctly translating polysomes.

Acts as a ribosome collision sensor. Detects stalled/collided disomes (pairs of ribosomes where the leading ribosome is stalled and a second ribosome has collided with it) and endonucleolytically cleaves mRNA at the 5' boundary of the stalled ribosome. Stalled/collided disomes form a new interface (primarily via the 30S subunits) that binds SmrB. Cleaved mRNA becomes available for tmRNA ligation, leading to ribosomal subunit dissociation and rescue of stalled ribosomes. The sequence is that of Ribosome rescue factor SmrB from Photorhabdus laumondii subsp. laumondii (strain DSM 15139 / CIP 105565 / TT01) (Photorhabdus luminescens subsp. laumondii).